The following is an 862-amino-acid chain: MSSRFFYGGGSDSDSSSSDEEELYSDREEEEKSEEEESSEEEDETSEEEESDEETGAKKFLKDVASDSEEEEEEEKVTVVKSAKDKRLDELENTIKLIENAKKINDWAVISTEFDKLNRQVAKITQSGPTPKIYIKTVADLEDFVNETVAKQKSGDKKLNASQAKGFNAAKQRIKKNNKDYANLINKYRKDKEDFMESDDEEATPVIAAPRITKLERIEAPAAAIDDDGFATVGRGGKTLQYTPESILKHLRVIVESRGKKNTDRMEQIRTMEKLLEVAQTPYQRIRVYLTLISTRFDLTSTSSANYMAVDQWKSAEQDFSSLLSVLENNRDHVVSEGAEEWEDDEKQPTIAPGETLYIPGSIVSFAERLDDELTRSLQHIDPHTAEYIERLSDEKLLYTDLVRAQAYVEGLNEAEKTDPRQDSVNRVVMRRLEHVYFKPSQVITILEDATWKALPSELDSSITPRASSGNVENLVLSLCNYLFKYSDGIIRARAMLCQIYFLALHDQYYRSRDLMLMSHLTENISNFDVSTQILFNRTLVQIGLCAFRSGLIYEAQNTLSEVCGSGRQKELLAQGIIMQRYSTVSPEQERLERQRQLPFHMHINLELLECIYLTSSMFLEVPLMAQTSSSPEMKRRVISKTFRRMLDYNERQVFTGPAENTRDGVIMSAKFLAAGDWKKAAEMLNSIKIWDLMPQPDKIKEMLSQQIQEEGLRTYLFTYAPFYDSLSIATLSNMFELSEKKISAIISRMISHEELAAALDQVNNAIVFRKGVELSRLQSQIVTLADKSMNLLEANEKTLEQRTQGMANAFQRDQGAGARGGRGSGRGGQARGGPRFPGGQQGRRPGGQQFGGGALGGAIKA.

Positions 1-81 (MSSRFFYGGG…EEEEKVTVVK (81 aa)) are disordered. The segment covering 17–54 (SSDEEELYSDREEEEKSEEEESSEEEDETSEEEESDEE) has biased composition (acidic residues). Basic and acidic residues predominate over residues 55 to 65 (TGAKKFLKDVA). Residues 66–75 (SDSEEEEEEE) show a composition bias toward acidic residues. Residues 600–774 (FHMHINLELL…NAIVFRKGVE (175 aa)) form the PCI domain. Residues 813–862 (RDQGAGARGGRGSGRGGQARGGPRFPGGQQGRRPGGQQFGGGALGGAIKA) are disordered. The segment covering 818 to 862 (GARGGRGSGRGGQARGGPRFPGGQQGRRPGGQQFGGGALGGAIKA) has biased composition (gly residues).

It belongs to the eIF-3 subunit C family. As to quaternary structure, component of the eukaryotic translation initiation factor 3 (eIF-3) complex.

It localises to the cytoplasm. Component of the eukaryotic translation initiation factor 3 (eIF-3) complex, which is involved in protein synthesis of a specialized repertoire of mRNAs and, together with other initiation factors, stimulates binding of mRNA and methionyl-tRNAi to the 40S ribosome. The eIF-3 complex specifically targets and initiates translation of a subset of mRNAs involved in cell proliferation. This Neosartorya fischeri (strain ATCC 1020 / DSM 3700 / CBS 544.65 / FGSC A1164 / JCM 1740 / NRRL 181 / WB 181) (Aspergillus fischerianus) protein is Eukaryotic translation initiation factor 3 subunit C (nip1).